The primary structure comprises 472 residues: Mitochondrial substrate carrier family protein C (472 aa).

Topologically, residues 1–189 are mitochondrial intermembrane; sequence MVLNENDKEF…ASSLRNTITY (189 aa). EF-hand domains follow at residues 6–41, 42–70, 73–108, and 110–145; these read NDKE…LRIP, SSEK…FEDF, ENIK…LNIP, and YSEQ…LPNS. The Ca(2+) site is built by Asp-19, Asp-21, Asn-23, Lys-25, Glu-30, Asp-55, Asp-57, Asp-59, Ser-61, Glu-66, Asp-86, Asn-88, Ser-90, Thr-92, Glu-97, Asp-123, Asn-125, Asp-127, Gln-129, and Glu-134. Solcar repeat units lie at residues 184 to 268, 276 to 362, and 375 to 461; these read RNTI…VKKL, LTSA…LKHK, and GQLL…FKKA. Residues 190–207 form a helical membrane-spanning segment; sequence MLAGSVAGFASRTSTAPL. The Mitochondrial matrix portion of the chain corresponds to 208-242; sequence ERVKIMCQLNHGKPISLISAFKACYKDGGIKGFFR. A helical membrane pass occupies residues 243–263; it reads GNLANIIKVSPESAVKFGTYE. At 264 to 281 the chain is on the mitochondrial intermembrane side; it reads YVKKLFAENDCELTSAQR. A helical membrane pass occupies residues 282-302; that stretch reads FISGSVAGVVSHTTLFPLEVV. Over 303–330 the chain is Mitochondrial matrix; that stretch reads RLRLSAEIAGTYNGIFDCFKKIAISEKS. A helical transmembrane segment spans residues 331 to 351; that stretch reads IRPFYRGLGASITATIPHSGV. The Mitochondrial intermembrane segment spans residues 352 to 377; the sequence is NMMVYEFLKHKVIKMTGNEFPTAGQL. Residues 378–398 form a helical membrane-spanning segment; sequence LVCASTSSVCGQLVGYPFHVV. The Mitochondrial matrix segment spans residues 399 to 441; that stretch reads KSRLITQGSSVNQEKYTGLFDGLTKIIKKEGPIGLYKGIVPSF. A helical membrane pass occupies residues 442–462; sequence MKSIPSHSITFIVYEGFKKAF. The Mitochondrial intermembrane segment spans residues 463–472; that stretch reads DVNLKEKKHH.

The protein belongs to the mitochondrial carrier (TC 2.A.29) family.

It is found in the mitochondrion inner membrane. Calcium-dependent mitochondrial solute carrier. Mitochondrial solute carriers shuttle metabolites, nucleotides, and cofactors through the mitochondrial inner membrane. The polypeptide is Mitochondrial substrate carrier family protein C (mcfC) (Dictyostelium discoideum (Social amoeba)).